Reading from the N-terminus, the 138-residue chain is Basic phospholipase A2 vaspin B chain (138 aa).

The N-terminal stretch at 1–16 (MRILWIVAVCLIGVEG) is a signal peptide. Disulfide bonds link C42–C131, C44–C60, C59–C111, C65–C138, C66–C104, C73–C97, and C91–C102. Ca(2+)-binding residues include Y43, G45, and G47. H63 is a catalytic residue. D64 contributes to the Ca(2+) binding site. Residue D105 is part of the active site.

It belongs to the phospholipase A2 family. Group II subfamily. D49 sub-subfamily. As to quaternary structure, heterodimer of a weakly toxic basic protein having phospholipase A2 activity (B chain (AC Q8JFG1)) and a non-toxic acidic protein functioning as its inhibitor (A chain). Requires Ca(2+) as cofactor. Expressed by the venom gland.

It is found in the secreted. The enzyme catalyses a 1,2-diacyl-sn-glycero-3-phosphocholine + H2O = a 1-acyl-sn-glycero-3-phosphocholine + a fatty acid + H(+). In terms of biological role, heterodimer: postsynaptic neurotoxin. Functionally, monomer: snake venom phospholipase A2 (PLA2) that shows postsynaptic neurotoxicity. PLA2 catalyzes the calcium-dependent hydrolysis of the 2-acyl groups in 3-sn-phosphoglycerides. This Vipera aspis aspis (Aspic viper) protein is Basic phospholipase A2 vaspin B chain.